The chain runs to 299 residues: Leucine zipper transcription factor-like protein 1 (299 aa).

Residues 96 to 296 adopt a coiled-coil conformation; sequence LKLQTDISEL…DLRKRLAKYE (201 aa). The interval 145–299 is interaction with BSS9; it reads GAAELLNKEI…KRLAKYEPED (155 aa).

The protein belongs to the LZTFL1 family. Self-associates. Interacts with BBS9; the interaction mediates the association of LZTL1 with the BBsome complex and regulates BBSome ciliary trafficking.

It localises to the cytoplasm. Its function is as follows. Regulates ciliary localization of the BBSome complex. Together with the BBSome complex, controls SMO ciliary trafficking and contributes to the sonic hedgehog (SHH) pathway regulation. May play a role in neurite outgrowth. May have tumor suppressor function. In Bos taurus (Bovine), this protein is Leucine zipper transcription factor-like protein 1 (LZTFL1).